A 169-amino-acid polypeptide reads, in one-letter code: Interleukin-25 (169 aa).

Residues 1 to 16 form the signal peptide; sequence MYQAVAFLAMIVGTHT. The segment at 47–70 is disordered; sequence SSASVSPPEPLSHTHHAESCRASK. Over residues 61–70 the composition is skewed to basic and acidic residues; the sequence is HHAESCRASK. 2 disulfides stabilise this stretch: C102-C160 and C107-C162. The N-linked (GlcNAc...) asparagine glycan is linked to N128.

This sequence belongs to the IL-17 family.

The protein localises to the secreted. Its function is as follows. Cytokine produced by various cells such as eosinophils, T-helper type 2 (Th2) cells or epithelial cells that plays a role in internal safety of adaptive immune responses by regulating cytokine production. Promotes and augments T-helper type 2 responses locally or systemically. Exerts its activity via its receptor composed of IL17RA and IL17RB for signal transduction. In turn, stimulates the JAK2-STAT5A pathway and promotes the secretion of type-2 associated cytokines including IL4, IL9 and IL13. Also induces the release of IL8, and IL6 from eosinophils through the combined activation of MAPK and NF-kappa-B pathways. Inhibits the differentiation of T-helper (Th17) cells via the production of IL4, IL5 and IL13. The sequence is that of Interleukin-25 (Il25) from Mus musculus (Mouse).